The primary structure comprises 554 residues: Formate--tetrahydrofolate ligase (554 aa).

67–74 is an ATP binding site; the sequence is TPTGEGKT.

This sequence belongs to the formate--tetrahydrofolate ligase family.

The catalysed reaction is (6S)-5,6,7,8-tetrahydrofolate + formate + ATP = (6R)-10-formyltetrahydrofolate + ADP + phosphate. It functions in the pathway one-carbon metabolism; tetrahydrofolate interconversion. The sequence is that of Formate--tetrahydrofolate ligase from Finegoldia magna (strain ATCC 29328 / DSM 20472 / WAL 2508) (Peptostreptococcus magnus).